Here is an 883-residue protein sequence, read N- to C-terminus: Phosphoenolpyruvate carboxylase (883 aa).

Residues His138 and Lys546 contribute to the active site.

The protein belongs to the PEPCase type 1 family. Requires Mg(2+) as cofactor.

It catalyses the reaction oxaloacetate + phosphate = phosphoenolpyruvate + hydrogencarbonate. Forms oxaloacetate, a four-carbon dicarboxylic acid source for the tricarboxylic acid cycle. The chain is Phosphoenolpyruvate carboxylase from Escherichia coli (strain 55989 / EAEC).